A 166-amino-acid chain; its full sequence is Putative 4-hydroxy-4-methyl-2-oxoglutarate aldolase (166 aa).

Residues 74 to 77 and arginine 96 contribute to the substrate site; that span reads GDQI. Residue aspartate 97 coordinates a divalent metal cation.

It belongs to the class II aldolase/RraA-like family. In terms of assembly, homotrimer. A divalent metal cation is required as a cofactor.

It carries out the reaction 4-hydroxy-4-methyl-2-oxoglutarate = 2 pyruvate. It catalyses the reaction oxaloacetate + H(+) = pyruvate + CO2. In terms of biological role, catalyzes the aldol cleavage of 4-hydroxy-4-methyl-2-oxoglutarate (HMG) into 2 molecules of pyruvate. Also contains a secondary oxaloacetate (OAA) decarboxylase activity due to the common pyruvate enolate transition state formed following C-C bond cleavage in the retro-aldol and decarboxylation reactions. The sequence is that of Putative 4-hydroxy-4-methyl-2-oxoglutarate aldolase from Xanthomonas campestris pv. campestris (strain 8004).